A 69-amino-acid polypeptide reads, in one-letter code: Alpha-conotoxin Mr1.7a (69 aa).

The first 21 residues, 1 to 21 (MGMRMMFTVFLLVVLATTVVS), serve as a signal peptide directing secretion. The propeptide occupies 22–49 (FTSNRVLDPAFRRRNAAAKASDLIALNA). Residues Pro52 and Pro58 each carry the 4-hydroxyproline; in Mr1.7b modification. 2 disulfides stabilise this stretch: Cys54-Cys60 and Cys55-Cys68. A lacks the Ser-Xaa-Pro motif that is crucial for potent interaction with nAChR region spans residues 56 to 58 (THP). The residue at position 68 (Cys68) is a Cysteine amide.

This sequence belongs to the conotoxin A superfamily. Post-translationally, two 4-hydroxyprolines have been detected by MS but the assignment of which of the three prolines is modified is uncertain. Expressed by the venom duct.

The protein localises to the secreted. Functionally, acts as a co-agonist with PNU (an alpha-7 nAChR-selective allosteric modulator) at the endogenous alpha-7/CHRNA7 nicotinic acetylcholine receptors (nAChR) when tested in human SH-SY5Y neuroblastoma cells. Is the third alpha-conotoxin that acts as an agonist (after alpha-conotoxin SrIA/SrIB). Also acts as an antagonist at human alpha-7 nAChRs heterologously expressed in Xenopus oocytes. Has possibly a distinct nAChR binding mode from other alpha-conotoxins, due to a different three residue motif (lacks the Ser-Xaa-Pro motif). Acts as a weak partial agonist at alpha-7/CHRNA7 nicotinic acetylcholine receptors (nAChR) when tested in human SH-SY5Y neuroblastoma cells. Has possibly a distinct nAChR binding mode from other alpha-conotoxins, due to a different three residue motif (lacks the Ser-Xaa-Pro motif). In Conus marmoreus (Marble cone), this protein is Alpha-conotoxin Mr1.7a.